Reading from the N-terminus, the 2723-residue chain is MADEEAEQERLSCGEGGCVAELQRLGERLQELELQLRESRVPAVEAATDYCQQLCQTLLEYAEKWKTSEDPLPLLEVYTVAIQSYVKARPYLTSECENVALVLERLALSCVELLLCLPVELSDKQWEQFQTLVQVAHEKLMENGSCELHFLATLAQETGVWKNPVLCTILSQEPLDKDKVNEFLAFEGPILLDMRIKHLIKTNQLSQATALAKLCSDHPEIGIKGSFKQTYLVCLCTSSPNGKLIEEISEVDCKDALEMICNLESEGDEKSALVLCTAFLSRQLQQGDMYCAWELTLFWSKLQQRVEPSIQVYLERCRQLSLLTKTVYHIFFLIKVINSETEGAGLATCIELCVKALRLESTENTEVKISICKTISCLLPDDLEVKRACQLSEFLIEPTVDAYYAVEMLYNQPDQKYDEENLPIPNSLRCELLLVLKTQWPFDPEFWDWKTLKRQCLALMGEEASIVSSIDELNDSEVYEKVVDYQEESKETSMNGLSGGVGANSGLLKDIGDEKQKKREIKQLRERGFISARFRNWQAYMQYCVLCDKEFLGHRIVRHAQKHYKDGIYSCPICAKNFNSKETFVPHVTLHVKQSSKERLAAMKPLRRLGRPPKITTTNENQKTNTVAKQEQRPIKKNSLYSTDFIVFNDNDGSDDENDDKDKSYEPEVIPVQKPVPVNEFNCPVTFCKKGFKYFKNLIAHVKGHKDNEDAKRFLEMQSKKVICQYCRRHFVSVTHLNDHLQMHCGSKPYICIQMKCKAGFNSYAELLTHRKEHQVFRAKCMFPKCGRIFSEAYLLYDHEAQHYNTYTCKFTGCGKVYRSQGELEKHLDDHSTPPEKVLPPEAQLNSSGDSIQPSEVNQNTAENIEKERSMLPSENNIENSLLADRSDAWDKSKAESAVTKQDQISASELRQANGPLSNGLENPATTPLLQSSEVAVSIKVSLNQGIEDNFGKQENSTVEGSGEALVTDLHTPVEDTCNDLCHPGFQERKEQDCFNDAHVTQNSLVNSETLKIGDLTPQNLERQVNNLMTFSVQNQAAFQNNLPTSKFECGDNVKTSSNLYNLPLKTLESIAFVPPQSDLSNSLGTPSVPPKAPVQKFSCQVEGCTRTYNSSQSIGKHMKTAHPDQYAAFKMQRKSKKGQKANNLNTPNNGKFVYFLPSPVNSSNPFFTSQTKANGNPACSAQLQHVSPPIFPAHLASVSTPLLSSMESVINPNITSQDKNEQGGMLCSQMENLPSTALPAQMEDLTKTVLPLNIDSGSDPFLPLPAESSSMSLFPSPADSGTNSVFSQLENNTNHYSSQIEGNTNSSFLKGGNGENAVFPSQVNVANNFSSTNAQQSAPEKVKKDRGRGPNGKERKPKHNKRAKWPAIIRDGKFICSRCYRAFTNPRSLGGHLSKRSYCKPLDGAEIAQELLQSNGQPSLLASMILSTNAVNLQQPQQSTFNPEACFKDPSFLQLLAENRSPAFLPNTFPRSGVTNFNTSVSQEGSEIIKQALETAGIPSTFEGAEMLSHVSTGCVSDASQVNATVMPNPTVPPLLHTVCHPNTLLTNQNRTSNSKTSSIEECSSLPVFPTNDLLLKTVENGLCSSSFPNSGGPSQNFTSNSSRVSVISGPQNTRSSHLNKKGNSASKRRKKVAPPLIAPNASQNLVTSDLTTMGLIAKSVEIPTTNLHSNVIPTCEPQSLVENLTQKLNNVNNQLFMTDVKENFKTSLESHTVLAPLTLKTENGDSQMMALNSCTTSINSDLQISEDNVIQNFEKTLEIIKTAMNSQILEVKSGSQGAGETSQNAQINYNIQLPSVNTVQNNKLPDSSPFSSFISVMPTKSNIPQSEVSHKEDQIQEILEGLQKLKLENDLSTPASQCVLINTSVTLTPTPVKSTADITVIQPVSEMINIQFNDKVNKPFVCQNQGCNYSAMTKDALFKHYGKIHQYTPEMILEIKKNQLKFAPFKCVVPTCTKTFTRNSNLRAHCQLVHHFTTEEMVKLKIKRPYGRKSQSENVPASRSTQVKKQLAMTEENKKESQPALELRAETQNTHSNVAVIPEKQLVEKKSPDKTESSLQVITVTSEQCNTNALTNTQTKGRKIRRHKKEKEEKKRKKPVSQSLEFPTRYSPYRPYRCVHQGCFAAFTIQQNLILHYQAVHKSDLPAFSAEVEEESEAGKESEETETKQTLKEFRCQVSDCSRIFQAITGLIQHYMKLHEMTPEEIESMTASVDVGKFPCDQLECKSSFTTYLNYVVHLEADHGIGLRASKTEEDGVYKCDCEGCDRIYATRSNLLRHIFNKHNDKHKAHLIRPRRLTPGQENMSSKANQEKSKSKHRGTKHSRCGKEGIKMPKTKRKKKNNLENKNAKIVQIEENKPYSLKRGKHVYSIKARNDALSECTSRFVTQYPCMIKGCTSVVTSESNIIRHYKCHKLSKAFTSQHRNLLIVFKRCCNSQVKETSEQEGAKNDVKDSDTCVSESNDNSRTTATVSQKEVEKNEKDEMDELTELFITKLINEDSTSVETQANTSSNVSNDFQEDNLCQSERQKASNLKRVNKEKNVSQNKKRKVEKAEPASAAELSSVRKEEETAVAIQTIEEHPASFDWSSFKPMGFEVSFLKFLEESAVKQKKNTDKDHPNTGNKKGSHSNSRKNIDKTAVTSGNHVCPCKESETFVQFANPSQLQCSDNVKIVLDKNLKDCTELVLKQLQEMKPTVSLKKLEVHSNDPDMSVMKDISIGKATGRGQY.

Residues 569 to 591 (YSCPICAKNFNSKETFVPHVTLH) form a C2H2-type 1 zinc finger. Residues 608 to 633 (RLGRPPKITTTNENQKTNTVAKQEQR) form a disordered region. Over residues 615 to 629 (ITTTNENQKTNTVAK) the composition is skewed to polar residues. Position 654 is a phosphoserine (serine 654). 5 consecutive C2H2-type zinc fingers follow at residues 681-705 (FNCP…VKGH), 722-744 (VICQ…LQMH), 750-774 (YICI…RKEH), 779-803 (AKCM…EAQH), and 807-831 (YTCK…LDDH). The segment covering 825 to 834 (EKHLDDHSTP) has biased composition (basic and acidic residues). The segment at 825 to 860 (EKHLDDHSTPPEKVLPPEAQLNSSGDSIQPSEVNQN) is disordered. Over residues 844–860 (QLNSSGDSIQPSEVNQN) the composition is skewed to polar residues. The segment at 1098–1123 (FSCQVEGCTRTYNSSQSIGKHMKTAH) adopts a C2H2-type 7 zinc-finger fold. At lysine 1117 the chain carries N6-acetyllysine. Position 1159 is a phosphoserine (serine 1159). Positions 1331–1364 (SSTNAQQSAPEKVKKDRGRGPNGKERKPKHNKRA) are disordered. Residues 1341 to 1355 (EKVKKDRGRGPNGKE) are compositionally biased toward basic and acidic residues. A C2H2-type 8; degenerate zinc finger spans residues 1375–1397 (FICSRCYRAFTNPRSLGGHLSKR). Over residues 1588–1627 (SFPNSGGPSQNFTSNSSRVSVISGPQNTRSSHLNKKGNSA) the composition is skewed to polar residues. A disordered region spans residues 1588-1634 (SFPNSGGPSQNFTSNSSRVSVISGPQNTRSSHLNKKGNSASKRRKKV). Residues 1827–1854 (QSEVSHKEDQIQEILEGLQKLKLENDLS) adopt a coiled-coil conformation. 2 C2H2-type zinc fingers span residues 1902 to 1927 (FVCQ…GKIH) and 1947 to 1972 (FKCV…QLVH). The interval 1986–2023 (RPYGRKSQSENVPASRSTQVKKQLAMTEENKKESQPAL) is disordered. Polar residues predominate over residues 1994–2006 (SENVPASRSTQVK). Residue lysine 2042 is modified to N6-acetyllysine. The tract at residues 2074–2103 (NTQTKGRKIRRHKKEKEEKKRKKPVSQSLE) is disordered. Residues 2078-2097 (KGRKIRRHKKEKEEKKRKKP) are compositionally biased toward basic residues. 4 C2H2-type zinc fingers span residues 2114–2139 (YRCV…QAVH), 2172–2197 (FRCQ…MKLH), 2216–2241 (FPCD…EADH), and 2256–2281 (YKCD…FNKH). Composition is skewed to basic residues over residues 2285-2294 (HKAHLIRPRR) and 2312-2322 (KSKHRGTKHSR). The tract at residues 2285–2345 (HKAHLIRPRR…KKKNNLENKN (61 aa)) is disordered. A C2H2-type 15 zinc finger spans residues 2386–2410 (YPCMIKGCTSVVTSESNIIRHYKCH). Residues 2441-2452 (QEGAKNDVKDSD) are compositionally biased toward basic and acidic residues. Disordered stretches follow at residues 2441–2480 (QEGA…EKDE), 2530–2564 (LKRV…VRKE), and 2606–2631 (QKKN…RKNI). A compositionally biased stretch (polar residues) spans 2453–2470 (TCVSESNDNSRTTATVSQ). Residues 2606–2615 (QKKNTDKDHP) show a composition bias toward basic and acidic residues.

Belongs to the krueppel C2H2-type zinc-finger protein family.

It is found in the nucleus. Its function is as follows. May be involved in transcriptional regulation. The protein is Zinc finger protein 292 (ZNF292) of Homo sapiens (Human).